The sequence spans 20 residues: Alkaline phosphatase (20 aa).

Positions Thr1–Thr20 are disordered.

In terms of assembly, homodimer; may be disulfide-linked. In terms of processing, the N-terminus is blocked.

The catalysed reaction is a phosphate monoester + H2O = an alcohol + phosphate. With respect to regulation, completely inhibited by thiol-reducing agents, such as DTT and 2-mercaptoethanol. Activity was also inhibited by sodium orthovanadate, sodium molybdate, N-ethylmaleimide, EDTA and zinc ion, but was not inhibited by okadaic acid. Acts against tyrosine-phosphatases. The sequence is that of Alkaline phosphatase from Prevotella intermedia.